The chain runs to 113 residues: Large ribosomal subunit protein bL19 (113 aa).

The protein belongs to the bacterial ribosomal protein bL19 family.

In terms of biological role, this protein is located at the 30S-50S ribosomal subunit interface and may play a role in the structure and function of the aminoacyl-tRNA binding site. The polypeptide is Large ribosomal subunit protein bL19 (Mycobacterium sp. (strain JLS)).